The chain runs to 109 residues: Nucleoid-associated protein APL_0075 (109 aa).

The interval 1–21 (MFGKGGLGGLMKQAQQMQERM) is disordered. Over residues 10–19 (LMKQAQQMQE) the composition is skewed to low complexity.

Belongs to the YbaB/EbfC family. As to quaternary structure, homodimer.

The protein resides in the cytoplasm. It is found in the nucleoid. Its function is as follows. Binds to DNA and alters its conformation. May be involved in regulation of gene expression, nucleoid organization and DNA protection. The polypeptide is Nucleoid-associated protein APL_0075 (Actinobacillus pleuropneumoniae serotype 5b (strain L20)).